The primary structure comprises 47 residues: Zinc-finger protein TK0143 (47 aa).

The C2H2-type zinc finger occupies 18–41 (FRCPRCGMVFRSAKAYTRHVNKAH). The Zn(2+) site is built by Cys-20, Cys-23, His-36, and His-41.

Crystallized in association with 70S ribosomes. Zn(2+) is required as a cofactor.

In Thermococcus kodakarensis (strain ATCC BAA-918 / JCM 12380 / KOD1) (Pyrococcus kodakaraensis (strain KOD1)), this protein is Zinc-finger protein TK0143.